Reading from the N-terminus, the 291-residue chain is Tyrosine-protein kinase PtkA (291 aa).

A disordered region spans residues 1–79 (MSSPRERRPA…RRASSPGESP (79 aa)). Positions 23 to 60 (HQTSRSSPDTTAPTGSGLSNRFVNDNGIVTDTTASGTN) are enriched in polar residues. Tyr262 is subject to Phosphotyrosine.

This sequence belongs to the HAD-like hydrolase superfamily. CbbY/CbbZ/Gph/YieH family. As to quaternary structure, interacts with PtpA. In terms of processing, autophosphorylated.

The catalysed reaction is L-tyrosyl-[protein] + ATP = O-phospho-L-tyrosyl-[protein] + ADP + H(+). Its function is as follows. Required for growth within macrophages. Catalyzes the phosphorylation of PtpA on the tyrosine residues at positions 128 and 129, thereby increasing PtpA phosphatase activity and promoting pathogenicity. This is Tyrosine-protein kinase PtkA from Mycobacterium bovis (strain ATCC BAA-935 / AF2122/97).